We begin with the raw amino-acid sequence, 448 residues long: Probable protein phosphatase 2C 74 (448 aa).

The disordered stretch occupies residues Met-1 to Glu-48. A lipid anchor (N-myristoyl glycine) is attached at Gly-2. Positions Gly-27–Pro-37 are enriched in basic residues. In terms of domain architecture, PPM-type phosphatase spans Thr-67–Leu-384. Mn(2+)-binding residues include Asp-103, Gly-104, Asp-329, and Asp-375. The tract at residues His-401–Val-431 is disordered. The span at Asp-412–Pro-426 shows a compositional bias: low complexity.

The protein belongs to the PP2C family. Interacts with KIN10. The cofactor is Mg(2+). Mn(2+) is required as a cofactor. In terms of tissue distribution, expressed in the whole plant.

The protein localises to the cell membrane. It catalyses the reaction O-phospho-L-seryl-[protein] + H2O = L-seryl-[protein] + phosphate. The catalysed reaction is O-phospho-L-threonyl-[protein] + H2O = L-threonyl-[protein] + phosphate. Its function is as follows. Acts as a protein phosphatase. This chain is Probable protein phosphatase 2C 74, found in Arabidopsis thaliana (Mouse-ear cress).